The chain runs to 123 residues: Class I hydrophobin 2 (123 aa).

Positions 1 to 16 are cleaved as a signal peptide; the sequence is MYAYTVIAFLAASVAA. Intrachain disulfides connect cysteine 35–cysteine 97, cysteine 43–cysteine 91, cysteine 44–cysteine 72, and cysteine 98–cysteine 116.

It belongs to the fungal hydrophobin family.

The protein resides in the secreted. The protein localises to the cell wall. In terms of biological role, aerial growth, conidiation, and dispersal of filamentous fungi in the environment rely upon a capability of their secreting small amphipathic proteins called hydrophobins (HPBs) with low sequence identity. Class I can self-assemble into an outermost layer of rodlet bundles on aerial cell surfaces, conferring cellular hydrophobicity that supports fungal growth, development and dispersal; whereas Class II form highly ordered films at water-air interfaces through intermolecular interactions but contribute nothing to the rodlet structure. HYD1 and HYD2 are required for the structural integrity of the long aerial chains of microconidia. Does not seem to be important for the ability to cause seedling disease. In Gibberella moniliformis (Maize ear and stalk rot fungus), this protein is Class I hydrophobin 2.